Here is a 101-residue protein sequence, read N- to C-terminus: Urease subunit beta (101 aa).

Belongs to the urease beta subunit family. In terms of assembly, heterotrimer of UreA (gamma), UreB (beta) and UreC (alpha) subunits. Three heterotrimers associate to form the active enzyme.

The protein localises to the cytoplasm. The catalysed reaction is urea + 2 H2O + H(+) = hydrogencarbonate + 2 NH4(+). It participates in nitrogen metabolism; urea degradation; CO(2) and NH(3) from urea (urease route): step 1/1. This chain is Urease subunit beta, found in Burkholderia vietnamiensis (strain G4 / LMG 22486) (Burkholderia cepacia (strain R1808)).